A 142-amino-acid polypeptide reads, in one-letter code: Large ribosomal subunit protein uL13 (142 aa).

This sequence belongs to the universal ribosomal protein uL13 family. As to quaternary structure, part of the 50S ribosomal subunit.

This protein is one of the early assembly proteins of the 50S ribosomal subunit, although it is not seen to bind rRNA by itself. It is important during the early stages of 50S assembly. In Lachnospira eligens (strain ATCC 27750 / DSM 3376 / VPI C15-48 / C15-B4) (Eubacterium eligens), this protein is Large ribosomal subunit protein uL13.